We begin with the raw amino-acid sequence, 417 residues long: Imidazolonepropionase (417 aa).

Residues histidine 80 and histidine 82 each coordinate Fe(3+). Zn(2+)-binding residues include histidine 80 and histidine 82. Residues arginine 89, tyrosine 152, and histidine 187 each contribute to the 4-imidazolone-5-propanoate site. Tyrosine 152 is an N-formimidoyl-L-glutamate binding site. Histidine 252 contacts Fe(3+). Residue histidine 252 participates in Zn(2+) binding. Glutamate 255 provides a ligand contact to 4-imidazolone-5-propanoate. A Fe(3+)-binding site is contributed by aspartate 326. Aspartate 326 is a binding site for Zn(2+). The N-formimidoyl-L-glutamate site is built by asparagine 328 and glycine 330. Serine 331 is a binding site for 4-imidazolone-5-propanoate.

The protein belongs to the metallo-dependent hydrolases superfamily. HutI family. It depends on Zn(2+) as a cofactor. Requires Fe(3+) as cofactor.

Its subcellular location is the cytoplasm. The catalysed reaction is 4-imidazolone-5-propanoate + H2O = N-formimidoyl-L-glutamate. It participates in amino-acid degradation; L-histidine degradation into L-glutamate; N-formimidoyl-L-glutamate from L-histidine: step 3/3. In terms of biological role, catalyzes the hydrolytic cleavage of the carbon-nitrogen bond in imidazolone-5-propanoate to yield N-formimidoyl-L-glutamate. It is the third step in the universal histidine degradation pathway. The sequence is that of Imidazolonepropionase from Bacteroides fragilis (strain YCH46).